The following is a 365-amino-acid chain: 2-aminoethylphosphonate--pyruvate transaminase (365 aa).

The residue at position 194 (K194) is an N6-(pyridoxal phosphate)lysine.

This sequence belongs to the class-V pyridoxal-phosphate-dependent aminotransferase family. PhnW subfamily. Homodimer. It depends on pyridoxal 5'-phosphate as a cofactor.

The catalysed reaction is (2-aminoethyl)phosphonate + pyruvate = phosphonoacetaldehyde + L-alanine. Functionally, involved in phosphonate degradation. This Bacillus cereus (strain ATCC 14579 / DSM 31 / CCUG 7414 / JCM 2152 / NBRC 15305 / NCIMB 9373 / NCTC 2599 / NRRL B-3711) protein is 2-aminoethylphosphonate--pyruvate transaminase.